A 441-amino-acid polypeptide reads, in one-letter code: ATP-dependent protease ATPase subunit HslU (441 aa).

ATP-binding positions include Ile-18, 60–65 (GVGKTE), Asp-254, Glu-319, and Arg-391.

This sequence belongs to the ClpX chaperone family. HslU subfamily. A double ring-shaped homohexamer of HslV is capped on each side by a ring-shaped HslU homohexamer. The assembly of the HslU/HslV complex is dependent on binding of ATP.

It localises to the cytoplasm. ATPase subunit of a proteasome-like degradation complex; this subunit has chaperone activity. The binding of ATP and its subsequent hydrolysis by HslU are essential for unfolding of protein substrates subsequently hydrolyzed by HslV. HslU recognizes the N-terminal part of its protein substrates and unfolds these before they are guided to HslV for hydrolysis. In Shewanella frigidimarina (strain NCIMB 400), this protein is ATP-dependent protease ATPase subunit HslU.